We begin with the raw amino-acid sequence, 507 residues long: Wax ester synthase/diacylglycerol acyltransferase 5 (507 aa).

Residues 1 to 211 (MEIKIRRRRG…LKTSSRCYSR (211 aa)) are Cytoplasmic-facing. The active-site Proton acceptor is H161. Residues 212-232 (FFWLVMVLWSAALLVLNTVCD) form a helical membrane-spanning segment. Residues 233-507 (ALEFIATALF…VVVQERTSTQ (275 aa)) are Lumenal-facing. Residues N314 and N421 are each glycosylated (N-linked (GlcNAc...) asparagine).

This sequence in the N-terminal section; belongs to the long-chain O-acyltransferase family. In terms of tissue distribution, mostly expressed in flowers and siliques.

The protein localises to the cell membrane. It is found in the endoplasmic reticulum membrane. It carries out the reaction a long chain fatty alcohol + a fatty acyl-CoA = a wax ester + CoA. The enzyme catalyses an acyl-CoA + a 1,2-diacyl-sn-glycerol = a triacyl-sn-glycerol + CoA. It participates in glycerolipid metabolism; triacylglycerol biosynthesis. The protein operates within lipid metabolism. Bifunctional wax ester synthase/diacylglycerol acyltransferase. Involved in cuticular wax biosynthesis. The chain is Wax ester synthase/diacylglycerol acyltransferase 5 from Arabidopsis thaliana (Mouse-ear cress).